A 926-amino-acid chain; its full sequence is Progesterone receptor (926 aa).

Residues 1 to 48 are disordered; that stretch reads MTELQAKDPQVLHTSGASPSPPHIGSPLLARLDSGPFQGSQHSDVSSV. The tract at residues 1-165 is AF3; mediates transcriptional activation (in isoform B); it reads MTELQAKDPQ…PATKGLLSPL (165 aa). Residues 1–559 are modulating, Pro-Rich; it reads MTELQAKDPQ…YGFDSLPQKI (559 aa). Residue Lys7 forms a Glycyl lysine isopeptide (Lys-Gly) (interchain with G-Cter in SUMO) linkage. At Ser20 the chain carries Phosphoserine. An LXXL motif 1 motif is present at residues 56–60; sequence LDGLL. A Phosphoserine modification is found at Ser82. The LXXL motif 1 motif lies at 116 to 120; that stretch reads LDSLL. Ser131 and Ser163 each carry phosphoserine. The interval 166–305 is mediates transcriptional transrepression (in isoform A); that stretch reads MSRPEIKAGD…LATTVVDFIH (140 aa). Residues 168 to 256 are disordered; sequence RPEIKAGDSS…GTGSGGGVAA (89 aa). The Nuclear localization signal motif lies at 184–188; it reads KVLPK. Ser191 and Ser214 each carry phosphoserine. Ser294 carries the phosphoserine; by MAPK1 modification. A disordered region spans residues 327–364; that stretch reads DSYDGGATAQGPFAPPRGSPSAPSPPVPCGDFPDCTYP. Over residues 339 to 354 the composition is skewed to pro residues; it reads FAPPRGSPSAPSPPVP. The residue at position 345 (Ser345) is a Phosphoserine; by MAPK. A Glycyl lysine isopeptide (Lys-Gly) (interchain with G-Cter in SUMO); alternate cross-link involves residue Lys388. Lys388 participates in a covalent cross-link: Glycyl lysine isopeptide (Lys-Gly) (interchain with G-Cter in ubiquitin); alternate. Residues 391–447 are disordered; the sequence is EEGADAAVRSPRPYLSAGASSSTFPDFPLAPAPQRAPSSRPGEAAVAGGPSSAAVSP. Ser400 carries the phosphoserine; by CDK2 modification. Low complexity predominate over residues 422 to 447; the sequence is APQRAPSSRPGEAAVAGGPSSAAVSP. An AF1; mediates transcriptional activation region spans residues 453–539; that stretch reads SALECILYKA…VYPPYLNYLR (87 aa). A Glycyl lysine isopeptide (Lys-Gly) (interchain with G-Cter in SUMO) cross-link involves residue Lys524. The segment at residues 557–632 is a DNA-binding region (nuclear receptor); the sequence is QKICLICGDE…AGMVLGGRKF (76 aa). NR C4-type zinc fingers lie at residues 560–580 and 596–615; these read CLIC…CGSC and CAGR…CPAC. Ser669 is modified (phosphoserine). In terms of domain architecture, NR LBD spans 672-906; it reads QEIQLVPPLI…EFPEMMSEVI (235 aa). Positions 673-926 are AF2; mediates transcriptional activation; sequence EIQLVPPLIN…MVKPLLFHKK (254 aa). Arg759 lines the progesterone pocket.

The protein belongs to the nuclear hormone receptor family. NR3 subfamily. Interacts with SMARD1 and UNC45A. Interacts with CUEDC2; the interaction promotes ubiquitination, decreases sumoylation, and represses transcriptional activity. Interacts with PIAS3; the interaction promotes sumoylation of PR in a hormone-dependent manner, inhibits DNA-binding, and alters nuclear export. Interacts with SP1; the interaction requires ligand-induced phosphorylation on Ser-294 by ERK1/2 MAPK. Interacts with PRMT2. Isoform A interacts with NCOR2. Isoform B (but not isoform A) interacts with NCOA2 and NCOA1. Isoform B (but not isoform A) interacts with KLF9. In terms of processing, phosphorylated on multiple serine sites. Several of these sites are hormone-dependent. Phosphorylation on Ser-294 is highly hormone-dependent and modulates ubiquitination and sumoylation on Lys-388. Phosphorylation on Ser-345 also requires induction by hormone. Basal phosphorylation on Ser-82, Ser-163, Ser-191 and Ser-400 is increased in response to progesterone and can be phosphorylated in vitro by the CDK2-A1 complex. Increased levels of phosphorylation on Ser-400 also in the presence of EGF, heregulin, IGF, PMA and FBS. Phosphorylation at this site by CDK2 is ligand-independent, and increases nuclear translocation and transcriptional activity. Phosphorylation at Ser-163 and Ser-294, but not at Ser-191, is impaired during the G(2)/M phase of the cell cycle. Phosphorylation on Ser-345 by ERK1/2 MAPK is required for interaction with SP1. Post-translationally, sumoylation is hormone-dependent and represses transcriptional activity. Sumoylation on all three sites is enhanced by PIAS3. Desumoylated by SENP1. Sumoylation on Lys-388, the main site of sumoylation, is repressed by ubiquitination on the same site, and modulated by phosphorylation at Ser-294. Ubiquitination is hormone-dependent and represses sumoylation on the same site. Promoted by MAPK-mediated phosphorylation on Ser-294. Ubiquitinated by UBR5, leading to its degradation: UBR5 specifically recognizes and binds ligand-bound PGR when it is not associated with coactivators (NCOAs). In presence of NCOAs, the UBR5-degron is not accessible, preventing its ubiquitination and degradation. In terms of processing, palmitoylated by ZDHHC7 and ZDHHC21. Palmitoylation is required for plasma membrane targeting and for rapid intracellular signaling via ERK and AKT kinases and cAMP generation. In terms of tissue distribution, expression of isoform A and isoform B in mammary epithelial cells is temporally and spatially separated during normal mammary gland development. Isoform A and isoform B are expressed in the pituitary. Isoform A and isoform B are differentially expressed in the ovary and oviduct, and the level of expression is dependent on both the cell type and estrous cycle stage.

The protein resides in the nucleus. It is found in the cytoplasm. Its function is as follows. The steroid hormones and their receptors are involved in the regulation of eukaryotic gene expression and affect cellular proliferation and differentiation in target tissues. Depending on the isoform, progesterone receptor functions as a transcriptional activator or repressor. Functionally, ligand-dependent transdominant repressor of steroid hormone receptor transcriptional activity including repression of its isoform B, MR and ER. Transrepressional activity may involve recruitment of corepressor NCOR2. Transcriptional activator of several progesteron-dependent promoters in a variety of cell types. Involved in activation of SRC-dependent MAPK signaling on hormone stimulation. The sequence is that of Progesterone receptor (Pgr) from Mus musculus (Mouse).